The chain runs to 589 residues: Ectoderm-neural cortex protein 1 (589 aa).

In terms of domain architecture, BTB spans 46 to 114 (TDVLLHAGNR…AYSSRVIINE (69 aa)). Kelch repeat units lie at residues 296–340 (ALFL…AIGC), 341–388 (KVYI…ELKH), 389–444 (CLYV…SAKL), 446–492 (LFAF…VLGN), 494–538 (IFIM…ASGN), and 539–585 (KLYV…STWK).

In terms of assembly, binds to RB1. Hypophosphorylated RB1 associates with ENC1 during neuronal differentiation, while hyperphosphorylated RB1 associates with ENC1 in undifferentiating cells. Part of a complex that contains CUL3, RBX1 and ENC1. Interacts indirectly with KEAP1. In terms of processing, ubiquitinated by E3 ubiquitin ligase complex formed by CUL3 and RBX1 and probably targeted for proteasome-independent degradation. Quinone-induced oxidative stress increases its ubiquitination. Primarily expressed in the nervous system.

Its subcellular location is the nucleus matrix. The protein localises to the cytoplasm. The protein resides in the cytoskeleton. In terms of biological role, actin-binding protein involved in the regulation of neuronal process formation and in differentiation of neural crest cells. Down-regulates transcription factor NF2L2/NRF2 by decreasing the rate of protein synthesis and not via a ubiquitin-mediated proteasomal degradation mechanism. The protein is Ectoderm-neural cortex protein 1 (Enc1) of Mus musculus (Mouse).